Here is a 212-residue protein sequence, read N- to C-terminus: Large ribosomal subunit protein uL3 (212 aa).

Position 153 is an N5-methylglutamine (glutamine 153).

This sequence belongs to the universal ribosomal protein uL3 family. As to quaternary structure, part of the 50S ribosomal subunit. Forms a cluster with proteins L14 and L19. In terms of processing, methylated by PrmB.

In terms of biological role, one of the primary rRNA binding proteins, it binds directly near the 3'-end of the 23S rRNA, where it nucleates assembly of the 50S subunit. The chain is Large ribosomal subunit protein uL3 from Azoarcus sp. (strain BH72).